Reading from the N-terminus, the 219-residue chain is MRMIRFRKKIPYLRYLEMQEKLRKFRRECILFLEHAPIITGGINYNPENLLLGKEFLESQGIQVHFVQRGGDFTAHEPGQLVIYPHVDLKKRNLPIRFYLENLLQSVIDSARTTWGLNLITDSDSPGLYLESNSSKKICSIGVNFKSFFTSHGVAFNLNNDFTAFRCINPCGRNWTDMTSVEKLGLDSGFAKRNQFISFMKANLNSFLGPISKLTHTVI.

The region spanning Lys24–Ser212 is the BPL/LPL catalytic domain. Substrate contacts are provided by residues Arg69 to His76, Ser140 to Gly142, and Gly153 to Ala155. Cys171 functions as the Acyl-thioester intermediate in the catalytic mechanism.

The protein belongs to the LipB family.

Its subcellular location is the cytoplasm. It catalyses the reaction octanoyl-[ACP] + L-lysyl-[protein] = N(6)-octanoyl-L-lysyl-[protein] + holo-[ACP] + H(+). It functions in the pathway protein modification; protein lipoylation via endogenous pathway; protein N(6)-(lipoyl)lysine from octanoyl-[acyl-carrier-protein]: step 1/2. In terms of biological role, catalyzes the transfer of endogenously produced octanoic acid from octanoyl-acyl-carrier-protein onto the lipoyl domains of lipoate-dependent enzymes. Lipoyl-ACP can also act as a substrate although octanoyl-ACP is likely to be the physiological substrate. The protein is Octanoyltransferase of Leptospira borgpetersenii serovar Hardjo-bovis (strain JB197).